Reading from the N-terminus, the 259-residue chain is MTILDDILVKTRQVIARDQASVPAAELVAAAKDLPVCRDFHGSLAATDQVRLIAEVKRASPSAGLIREDFDPPTIAKSYEDGGAACISVLTDEPFFQGSLDYLRQVRSAVDLPILRKDFIVDPYQLLQARVAGADAVLLIAECLSPQQLIEMDEQASELGLQTLIELYEPENLAPVLATKTRLVGINNRDLRTFETDLQHCVRLAADIPSDRLVVGESGIRTAADVAMLKAGGIKAILVGESLMRQPDITIATKALLAS.

The protein belongs to the TrpC family.

It carries out the reaction 1-(2-carboxyphenylamino)-1-deoxy-D-ribulose 5-phosphate + H(+) = (1S,2R)-1-C-(indol-3-yl)glycerol 3-phosphate + CO2 + H2O. The protein operates within amino-acid biosynthesis; L-tryptophan biosynthesis; L-tryptophan from chorismate: step 4/5. The sequence is that of Indole-3-glycerol phosphate synthase from Rhodopirellula baltica (strain DSM 10527 / NCIMB 13988 / SH1).